A 148-amino-acid polypeptide reads, in one-letter code: Ribonuclease H (148 aa).

The region spanning 3–144 (DKEQVVIYTD…ADQLANRGVA (142 aa)) is the RNase H type-1 domain. Mg(2+) contacts are provided by Asp12, Glu50, Asp72, and Asp136. Residues 125-148 (GHTGDPGNERADQLANRGVAELPR) are disordered.

The protein belongs to the RNase H family. Monomer. It depends on Mg(2+) as a cofactor.

Its subcellular location is the cytoplasm. It carries out the reaction Endonucleolytic cleavage to 5'-phosphomonoester.. Functionally, endonuclease that specifically degrades the RNA of RNA-DNA hybrids. The sequence is that of Ribonuclease H from Pseudomonas paraeruginosa (strain DSM 24068 / PA7) (Pseudomonas aeruginosa (strain PA7)).